The sequence spans 536 residues: Caspase recruitment domain-containing protein 9 (536 aa).

Position 2 is a phosphoserine (Ser2). Zn(2+) contacts are provided by Asp3, Cys10, and His73. The CARD domain maps to 6–98 (NDDECWSVLE…QLYKKVTGKE (93 aa)). A linker region spans residues 99-116 (PARVFSMIIDASGESGLT). Coiled coils occupy residues 117 to 277 (QLLM…DRSS) and 332 to 419 (LRKD…QQLE). A Glycyl lysine isopeptide (Lys-Gly) (interchain with G-Cter in ubiquitin) cross-link involves residue Lys125. Thr231 is subject to Phosphothreonine. Ser277 is modified (phosphoserine). Phosphoserine occurs at positions 424, 425, 431, 450, 460, 483, and 498. A disordered region spans residues 427 to 536 (LEDGSPRRSQ…GSDNTDTEGS (110 aa)). Residues 487–502 (PPEKERRRLKESFENY) are compositionally biased toward basic and acidic residues. Positions 503–513 (RRKRALRKMQK) are enriched in basic residues. 2 positions are modified to phosphothreonine; by CK2: Thr531 and Thr533.

Monomer. Homodimer; homodimerization is mediated by the CARD domain which forms an extensive interaction with the adjacent linker and coiled-coil regions; leads to an autoinhibited state. Homomultimer; polymerizes following activation, forming a nucleating helical template that seeds BCL10-filament formation via a CARD-CARD interaction. Interacts (via CARD domain) with BCL10 (via CARD domain); interaction takes place following CARD9 activation and polymerization, leading to the formation of a filamentous CBM complex assembly. Component of a CBM complex (CARD9-BCL10, MALT1), composed of CARD9, BCL10 and MALT1. Interacts with RASGRF1. Interacts with NOD2 (via NACHT domain); interaction is direct. Interacts with RIPK2. Interacts with VHL; without leading to protein degradation. Phosphorylated at Thr-231 by PRKCD downstream of C-type lectin receptors activation: phosphorylation promotes interaction with BCL10, followed by activation of NF-kappa-B and MAP kinase p38 pathways. Phosphorylated at Thr-531 and Thr-533 by CK2 following interaction with VHL, leading to inhibit the ability to activate NF-kappa-B. Post-translationally, ubiquitinated at Lys-125 via 'Lys-27'-linked ubiquitin by TRIM62 downstream of C-type lectin receptors activation; leading to CARD9 activation, followed by activation of NF-kappa-B and MAP kinase p38 pathways. Deubiquitinated at Lys-125 by USP15, inhibiting CARD9. In terms of tissue distribution, expression is restricted to several populations of phagocytes, such as macrophages, monocytes, and dendritic cells. Highly expressed in spleen. Also detected in liver, placenta, lung, peripheral blood leukocytes and in brain.

Its subcellular location is the cytoplasm. With respect to regulation, maintained in an autoinhibited state via homodimerization in which the CARD domain forms an extensive interaction with the adjacent linker and coiled-coil regions. Activation downstream of C-type lectin receptors, by phosphorylation by PRKCD and/or ubiquitination by TRIM62, triggers disruption of the CARD domain-coiled coil interface, CARD9 homooligomerization and BCL10 recruitment, followed by activation of NF-kappa-B and MAP kinase p38 pathways. Zinc-binding inhibits activation by stabilizing the CARD ground-state conformation and restricting its capacity to form BCL10-nucleating filaments. Functionally, adapter protein that plays a key role in innate immune response against fungi by forming signaling complexes downstream of C-type lectin receptors. CARD9-mediated signals are essential for antifungal immunity against a subset of fungi from the phylum Ascomycota. Transduces signals in myeloid cells downstream of C-type lectin receptors CLEC7A (dectin-1), CLEC6A (dectin-2) and CLEC4E (Mincle), which detect pathogen-associated molecular pattern metabolites (PAMPs), such as fungal carbohydrates, and trigger CARD9 activation. Upon activation, CARD9 homooligomerizes to form a nucleating helical template that recruits BCL10 via CARD-CARD interaction, thereby promoting polymerization of BCL10 and subsequent recruitment of MALT1: this leads to activation of NF-kappa-B and MAP kinase p38 (MAPK11, MAPK12, MAPK13 and/or MAPK14) pathways which stimulate expression of genes encoding pro-inflammatory cytokines and chemokines. CARD9 signaling in antigen-presenting cells links innate sensing of fungi to the activation of adaptive immunity and provides a cytokine milieu that induces the development and subsequent of interleukin 17-producing T helper (Th17) cells. Also involved in activation of myeloid cells via classical ITAM-associated receptors and TLR: required for TLR-mediated activation of MAPK, while it is not required for TLR-induced activation of NF-kappa-B. CARD9 can also be engaged independently of BCL10: forms a complex with RASGRF1 downstream of C-type lectin receptors, which recruits and activates HRAS, leading to ERK activation and the production of cytokines. Acts as an important regulator of the intestinal commensal fungi (mycobiota) component of the gut microbiota. Plays an essential role in antifungal immunity against dissemination of gut fungi: acts by promoting induction of antifungal IgG antibodies response in CX3CR1(+) macrophages to confer protection against disseminated C.albicans or C.auris infection. Also mediates immunity against other pathogens, such as certain bacteria, viruses and parasites; CARD9 signaling is however redundant with other innate immune responses. In response to L.monocytogenes infection, required for the production of inflammatory cytokines activated by intracellular peptidoglycan: acts by connecting NOD2 recognition of peptidoglycan to downstream activation of MAP kinases (MAPK) without activating NF-kappa-B. This is Caspase recruitment domain-containing protein 9 from Homo sapiens (Human).